A 256-amino-acid polypeptide reads, in one-letter code: tRNA-cytidine(32) 2-sulfurtransferase (256 aa).

A PP-loop motif motif is present at residues 35–40 (SGGKDS). [4Fe-4S] cluster contacts are provided by Cys110, Cys113, and Cys201.

This sequence belongs to the TtcA family. As to quaternary structure, homodimer. The cofactor is Mg(2+). It depends on [4Fe-4S] cluster as a cofactor.

Its subcellular location is the cytoplasm. It carries out the reaction cytidine(32) in tRNA + S-sulfanyl-L-cysteinyl-[cysteine desulfurase] + AH2 + ATP = 2-thiocytidine(32) in tRNA + L-cysteinyl-[cysteine desulfurase] + A + AMP + diphosphate + H(+). It participates in tRNA modification. Catalyzes the ATP-dependent 2-thiolation of cytidine in position 32 of tRNA, to form 2-thiocytidine (s(2)C32). The sulfur atoms are provided by the cysteine/cysteine desulfurase (IscS) system. This Coxiella burnetii (strain Dugway 5J108-111) protein is tRNA-cytidine(32) 2-sulfurtransferase.